Here is a 526-residue protein sequence, read N- to C-terminus: Bifunctional purine biosynthesis protein PurH (526 aa).

The 147-residue stretch at 1–147 (MSVIKRALIS…KNWKHVAIVT (147 aa)) folds into the MGS-like domain.

This sequence belongs to the PurH family.

The enzyme catalyses (6R)-10-formyltetrahydrofolate + 5-amino-1-(5-phospho-beta-D-ribosyl)imidazole-4-carboxamide = 5-formamido-1-(5-phospho-D-ribosyl)imidazole-4-carboxamide + (6S)-5,6,7,8-tetrahydrofolate. The catalysed reaction is IMP + H2O = 5-formamido-1-(5-phospho-D-ribosyl)imidazole-4-carboxamide. The protein operates within purine metabolism; IMP biosynthesis via de novo pathway; 5-formamido-1-(5-phospho-D-ribosyl)imidazole-4-carboxamide from 5-amino-1-(5-phospho-D-ribosyl)imidazole-4-carboxamide (10-formyl THF route): step 1/1. Its pathway is purine metabolism; IMP biosynthesis via de novo pathway; IMP from 5-formamido-1-(5-phospho-D-ribosyl)imidazole-4-carboxamide: step 1/1. This chain is Bifunctional purine biosynthesis protein PurH, found in Neisseria gonorrhoeae (strain NCCP11945).